The chain runs to 248 residues: UPF0246 protein RPR_00055 (248 aa).

It belongs to the UPF0246 family.

This Rickettsia peacockii (strain Rustic) protein is UPF0246 protein RPR_00055.